A 434-amino-acid chain; its full sequence is Tol-Pal system protein TolB (434 aa).

A signal peptide spans 1-21 (MTVRRALALAALALAVSPALA). Residues 411 to 434 (GDRQTPVTSGKTDLAAPAWGPLAP) form a disordered region.

The protein belongs to the TolB family. The Tol-Pal system is composed of five core proteins: the inner membrane proteins TolA, TolQ and TolR, the periplasmic protein TolB and the outer membrane protein Pal. They form a network linking the inner and outer membranes and the peptidoglycan layer.

It localises to the periplasm. Part of the Tol-Pal system, which plays a role in outer membrane invagination during cell division and is important for maintaining outer membrane integrity. The protein is Tol-Pal system protein TolB of Anaeromyxobacter dehalogenans (strain 2CP-1 / ATCC BAA-258).